Reading from the N-terminus, the 348-residue chain is Dual-specificity RNA methyltransferase RlmN (348 aa).

Glu94 (proton acceptor) is an active-site residue. The Radical SAM core domain maps to Gly100 to Arg330. A disulfide bond links Cys107 and Cys336. [4Fe-4S] cluster contacts are provided by Cys114, Cys118, and Cys121. S-adenosyl-L-methionine-binding positions include Gly163–Glu164, Ser195, Ser217–Asn219, and Asn293. Cys336 acts as the S-methylcysteine intermediate in catalysis.

The protein belongs to the radical SAM superfamily. RlmN family. The cofactor is [4Fe-4S] cluster.

The protein localises to the cytoplasm. The enzyme catalyses adenosine(2503) in 23S rRNA + 2 reduced [2Fe-2S]-[ferredoxin] + 2 S-adenosyl-L-methionine = 2-methyladenosine(2503) in 23S rRNA + 5'-deoxyadenosine + L-methionine + 2 oxidized [2Fe-2S]-[ferredoxin] + S-adenosyl-L-homocysteine. It carries out the reaction adenosine(37) in tRNA + 2 reduced [2Fe-2S]-[ferredoxin] + 2 S-adenosyl-L-methionine = 2-methyladenosine(37) in tRNA + 5'-deoxyadenosine + L-methionine + 2 oxidized [2Fe-2S]-[ferredoxin] + S-adenosyl-L-homocysteine. Functionally, specifically methylates position 2 of adenine 2503 in 23S rRNA and position 2 of adenine 37 in tRNAs. m2A2503 modification seems to play a crucial role in the proofreading step occurring at the peptidyl transferase center and thus would serve to optimize ribosomal fidelity. This is Dual-specificity RNA methyltransferase RlmN from Syntrophus aciditrophicus (strain SB).